The primary structure comprises 254 residues: Small ribosomal subunit protein uS2 (254 aa).

It belongs to the universal ribosomal protein uS2 family.

The sequence is that of Small ribosomal subunit protein uS2 from Legionella pneumophila (strain Lens).